The sequence spans 290 residues: Small ribosomal subunit protein uS2 (290 aa).

The segment covering 263-282 has biased composition (low complexity); sequence ATAGATWEAEAGGDWAAESA. Positions 263–290 are disordered; the sequence is ATAGATWEAEAGGDWAAESAQPNPETKW.

Belongs to the universal ribosomal protein uS2 family. Component of the small ribosomal subunit. Mature ribosomes consist of a small (40S) and a large (60S) subunit. The 40S subunit contains about 33 different proteins and 1 molecule of RNA (18S). The 60S subunit contains about 49 different proteins and 3 molecules of RNA (25S, 5.8S and 5S). Interacts with rps21.

It is found in the cytoplasm. Its function is as follows. Required for the assembly and/or stability of the 40S ribosomal subunit. Required for the processing of the 20S rRNA-precursor to mature 18S rRNA in a late step of the maturation of 40S ribosomal subunits. The chain is Small ribosomal subunit protein uS2 (rps0) from Talaromyces stipitatus (strain ATCC 10500 / CBS 375.48 / QM 6759 / NRRL 1006) (Penicillium stipitatum).